We begin with the raw amino-acid sequence, 290 residues long: Glutamate racemase (290 aa).

Residues 32–33 (DS) and 64–65 (YG) contribute to the substrate site. The active-site Proton donor/acceptor is Cys-96. 97-98 (NT) contacts substrate. Catalysis depends on Cys-208, which acts as the Proton donor/acceptor. 209 to 210 (TH) lines the substrate pocket.

The protein belongs to the aspartate/glutamate racemases family.

It carries out the reaction L-glutamate = D-glutamate. It functions in the pathway cell wall biogenesis; peptidoglycan biosynthesis. Functionally, provides the (R)-glutamate required for cell wall biosynthesis. The sequence is that of Glutamate racemase from Sodalis glossinidius (strain morsitans).